Reading from the N-terminus, the 437-residue chain is Chaperone SurA (437 aa).

The first 22 residues, 1–22 (MKNWKFPLISTLLLLLTINVHA), serve as a signal peptide directing secretion. 2 consecutive PpiC domains span residues 173-274 (TVQY…KIDD) and 283-383 (VTEV…EVLE).

The protein resides in the periplasm. It carries out the reaction [protein]-peptidylproline (omega=180) = [protein]-peptidylproline (omega=0). Its function is as follows. Chaperone involved in the correct folding and assembly of outer membrane proteins. Recognizes specific patterns of aromatic residues and the orientation of their side chains, which are found more frequently in integral outer membrane proteins. May act in both early periplasmic and late outer membrane-associated steps of protein maturation. The protein is Chaperone SurA of Aliivibrio fischeri (strain ATCC 700601 / ES114) (Vibrio fischeri).